Here is an 845-residue protein sequence, read N- to C-terminus: Protein P (845 aa).

The segment at 1–179 is terminal protein domain (TP); the sequence is MPLSYQHFRK…FCGSPYSWEQ (179 aa). The segment at 180 to 348 is spacer; it reads ELQHGRLVIK…YCLSHLVNLR (169 aa). The interval 226–245 is disordered; sequence GLQPHQGPLASSQPGRSGSI. A polymerase/reverse transcriptase domain (RT) region spans residues 349-692; it reads EDWGPCDEHG…YMNLYPVARQ (344 aa). The region spanning 359 to 602 is the Reverse transcriptase domain; that stretch reads EHHIRIPRTP…YSLNFMGYII (244 aa). 3 residues coordinate Mg(2+): Asp431, Asp553, and Asp554.

It belongs to the hepadnaviridae P protein family.

The catalysed reaction is DNA(n) + a 2'-deoxyribonucleoside 5'-triphosphate = DNA(n+1) + diphosphate. It carries out the reaction Endonucleolytic cleavage to 5'-phosphomonoester.. With respect to regulation, activated by host HSP70 and HSP40 in vitro to be able to bind the epsilon loop of the pgRNA. Because deletion of the RNase H region renders the protein partly chaperone-independent, the chaperones may be needed indirectly to relieve occlusion of the RNA-binding site by this domain. Inhibited by several reverse-transcriptase inhibitors: Lamivudine, Adefovir and Entecavir. Multifunctional enzyme that converts the viral RNA genome into dsDNA in viral cytoplasmic capsids. This enzyme displays a DNA polymerase activity that can copy either DNA or RNA templates, and a ribonuclease H (RNase H) activity that cleaves the RNA strand of RNA-DNA heteroduplexes in a partially processive 3'- to 5'-endonucleasic mode. Neo-synthesized pregenomic RNA (pgRNA) are encapsidated together with the P protein, and reverse-transcribed inside the nucleocapsid. Initiation of reverse-transcription occurs first by binding the epsilon loop on the pgRNA genome, and is initiated by protein priming, thereby the 5'-end of (-)DNA is covalently linked to P protein. Partial (+)DNA is synthesized from the (-)DNA template and generates the relaxed circular DNA (RC-DNA) genome. After budding and infection, the RC-DNA migrates in the nucleus, and is converted into a plasmid-like covalently closed circular DNA (cccDNA). The activity of P protein does not seem to be necessary for cccDNA generation, and is presumably released from (+)DNA by host nuclear DNA repair machinery. The chain is Protein P from Homo sapiens (Human).